The primary structure comprises 309 residues: Aspartate carbamoyltransferase catalytic subunit (309 aa).

Carbamoyl phosphate is bound by residues Arg58 and Thr59. Lys86 lines the L-aspartate pocket. Residues Arg108, His136, and Gln139 each contribute to the carbamoyl phosphate site. L-aspartate is bound by residues Arg169 and Arg223. Gly264 and Pro265 together coordinate carbamoyl phosphate.

This sequence belongs to the aspartate/ornithine carbamoyltransferase superfamily. ATCase family. In terms of assembly, heterododecamer (2C3:3R2) of six catalytic PyrB chains organized as two trimers (C3), and six regulatory PyrI chains organized as three dimers (R2).

It catalyses the reaction carbamoyl phosphate + L-aspartate = N-carbamoyl-L-aspartate + phosphate + H(+). It functions in the pathway pyrimidine metabolism; UMP biosynthesis via de novo pathway; (S)-dihydroorotate from bicarbonate: step 2/3. Catalyzes the condensation of carbamoyl phosphate and aspartate to form carbamoyl aspartate and inorganic phosphate, the committed step in the de novo pyrimidine nucleotide biosynthesis pathway. This Pelotomaculum thermopropionicum (strain DSM 13744 / JCM 10971 / SI) protein is Aspartate carbamoyltransferase catalytic subunit.